We begin with the raw amino-acid sequence, 427 residues long: UPF0597 protein CD630_32320 (427 aa).

This sequence belongs to the UPF0597 family.

The chain is UPF0597 protein CD630_32320 from Clostridioides difficile (strain 630) (Peptoclostridium difficile).